The chain runs to 372 residues: Trihelix transcription factor GT-4 (372 aa).

The Myb-like domain occupies 47–111; that stretch reads APKKRAETWA…MCTDKWRNIL (65 aa). Serine 167 is modified (phosphoserine).

The protein resides in the nucleus. Probable transcription factor that binds specific DNA sequence. The protein is Trihelix transcription factor GT-4 (GT-4) of Arabidopsis thaliana (Mouse-ear cress).